A 117-amino-acid polypeptide reads, in one-letter code: Holo-[acyl-carrier-protein] synthase (117 aa).

Mg(2+)-binding residues include D8 and E55.

Belongs to the P-Pant transferase superfamily. AcpS family. The cofactor is Mg(2+).

Its subcellular location is the cytoplasm. The enzyme catalyses apo-[ACP] + CoA = holo-[ACP] + adenosine 3',5'-bisphosphate + H(+). Functionally, transfers the 4'-phosphopantetheine moiety from coenzyme A to a Ser of acyl-carrier-protein. The protein is Holo-[acyl-carrier-protein] synthase of Finegoldia magna (strain ATCC 29328 / DSM 20472 / WAL 2508) (Peptostreptococcus magnus).